A 270-amino-acid chain; its full sequence is Protein MGF 110-1L (270 aa).

Positions 1–26 (MLGLQIITLLFIPTLLYAYELEPLER) are cleaved as a signal peptide. Residues 1–146 (MLGLQIITLL…YIRKRSLQTI (146 aa)) form an A repeat. N-linked (GlcNAc...) asparagine; by host glycosylation is present at asparagine 75. The next 2 membrane-spanning stretches (helical) occupy residues 118-138 (WQKL…VNYI) and 146-166 (IVYL…MLYR). Residues 147–270 (VYLLVLLVIF…DNLMKKQDIM (124 aa)) form a B repeat.

It belongs to the asfivirus MGF 110 family.

It is found in the membrane. Functionally, plays a role in virus cell tropism, and may be required for efficient virus replication in macrophages. The polypeptide is Protein MGF 110-1L (Ornithodoros (relapsing fever ticks)).